A 162-amino-acid chain; its full sequence is Cytochrome c-type biogenesis protein CcmE (162 aa).

Over 1 to 8 (MNPRRKKR) the chain is Cytoplasmic. Residues 9-29 (LTLAVALIGGVAAIASLLLYA) traverse the membrane as a helical; Signal-anchor for type II membrane protein segment. Over 30 to 162 (LNSNLNLFYT…YSQQKAPDTK (133 aa)) the chain is Periplasmic. 2 residues coordinate heme: H131 and Y135. The interval 139–162 (EVAEAMGQKHEKLDYSQQKAPDTK) is disordered. Residues 153 to 162 (YSQQKAPDTK) show a composition bias toward polar residues.

This sequence belongs to the CcmE/CycJ family.

Its subcellular location is the cell inner membrane. In terms of biological role, heme chaperone required for the biogenesis of c-type cytochromes. Transiently binds heme delivered by CcmC and transfers the heme to apo-cytochromes in a process facilitated by CcmF and CcmH. This chain is Cytochrome c-type biogenesis protein CcmE, found in Shewanella putrefaciens (strain CN-32 / ATCC BAA-453).